The chain runs to 697 residues: Elongation factor G 2 (697 aa).

Positions 5–280 (SLYRNIGIFA…AVVDYLPSPT (276 aa)) constitute a tr-type G domain. GTP contacts are provided by residues 14–21 (AHVDAGKT), 78–82 (DTPGH), and 132–135 (NKLD).

Belongs to the TRAFAC class translation factor GTPase superfamily. Classic translation factor GTPase family. EF-G/EF-2 subfamily.

Its subcellular location is the cytoplasm. Its function is as follows. Catalyzes the GTP-dependent ribosomal translocation step during translation elongation. During this step, the ribosome changes from the pre-translocational (PRE) to the post-translocational (POST) state as the newly formed A-site-bound peptidyl-tRNA and P-site-bound deacylated tRNA move to the P and E sites, respectively. Catalyzes the coordinated movement of the two tRNA molecules, the mRNA and conformational changes in the ribosome. The polypeptide is Elongation factor G 2 (Saccharophagus degradans (strain 2-40 / ATCC 43961 / DSM 17024)).